The following is a 124-amino-acid chain: Heat-labile enterotoxin B chain (124 aa).

An N-terminal signal peptide occupies residues 1–21; sequence MNKVKCYVLFTALLSSLCAYG. An intrachain disulfide couples C30 to C107.

In terms of assembly, heterohexamer of one A chain and of five B chains.

Functionally, the biological activity of the toxin is produced by the A chain, which activates intracellular adenyl cyclase. This Escherichia coli O78:H11 (strain H10407 / ETEC) protein is Heat-labile enterotoxin B chain (eltB).